An 858-amino-acid chain; its full sequence is DNA mismatch repair protein MutS (858 aa).

An ATP-binding site is contributed by 600–607; it reads GPNMSGKS.

This sequence belongs to the DNA mismatch repair MutS family.

In terms of biological role, this protein is involved in the repair of mismatches in DNA. It is possible that it carries out the mismatch recognition step. This protein has a weak ATPase activity. The sequence is that of DNA mismatch repair protein MutS from Bacillus pumilus (strain SAFR-032).